The sequence spans 72 residues: NADH dehydrogenase [ubiquinone] 1 beta subcomplex subunit 3-A (72 aa).

The chain crosses the membrane as a helical span at residues 31-48 (ALPGIGIGVGAFCVYLVG).

This sequence belongs to the complex I NDUFB3 subunit family. Complex I is composed of at least 49 different subunits.

The protein resides in the mitochondrion inner membrane. Accessory subunit of the mitochondrial membrane respiratory chain NADH dehydrogenase (Complex I), that is believed not to be involved in catalysis. Complex I functions in the transfer of electrons from NADH to the respiratory chain. The immediate electron acceptor for the enzyme is believed to be ubiquinone. This is NADH dehydrogenase [ubiquinone] 1 beta subcomplex subunit 3-A from Arabidopsis thaliana (Mouse-ear cress).